A 626-amino-acid polypeptide reads, in one-letter code: DNA-directed RNA polymerase subunit gamma (626 aa).

Zn(2+) contacts are provided by Cys-71, Cys-73, Cys-86, and Cys-89. Asp-467, Asp-469, and Asp-471 together coordinate Mg(2+).

This sequence belongs to the RNA polymerase beta' chain family. RpoC1 subfamily. In cyanobacteria the RNAP catalytic core is composed of 2 alpha, 1 beta, 1 beta', 1 gamma and 1 omega subunit. When a sigma factor is associated with the core the holoenzyme is formed, which can initiate transcription. It depends on Mg(2+) as a cofactor. Zn(2+) serves as cofactor.

It carries out the reaction RNA(n) + a ribonucleoside 5'-triphosphate = RNA(n+1) + diphosphate. Functionally, DNA-dependent RNA polymerase catalyzes the transcription of DNA into RNA using the four ribonucleoside triphosphates as substrates. The polypeptide is DNA-directed RNA polymerase subunit gamma (Microcystis aeruginosa (strain NIES-843 / IAM M-2473)).